A 221-amino-acid polypeptide reads, in one-letter code: Tetraspanin-2 (221 aa).

At 1–13 the chain is on the cytoplasmic side; it reads MGRFRGGLRCIKY. Residues 14-34 form a helical membrane-spanning segment; sequence LLLGFNLLFWLAGSAVIAFGL. Over 35–54 the chain is Extracellular; the sequence is WFRFGGTIKDLSSEEKSPEY. A helical membrane pass occupies residues 55–75; it reads FYVGLYVLVGAGALMMAVGFF. At 76–90 the chain is on the cytoplasmic side; it reads GCCGAMRESQCVLGS. A helical membrane pass occupies residues 91 to 111; that stretch reads FFTCLLVIFAAEVTTGVFAFI. Residues 112–188 are Extracellular-facing; sequence GKDVAIRHVQ…ETIISVKLQL (77 aa). N-linked (GlcNAc...) asparagine glycosylation occurs at N139. A helical membrane pass occupies residues 189–209; sequence IGIVGIGIAGLTIFGMIFSMV. At 210-221 the chain is on the cytoplasmic side; it reads LCCAIRNSRDVI.

The protein belongs to the tetraspanin (TM4SF) family. As to expression, expression is restricted to the nervous system.

The protein localises to the membrane. Functionally, may play a role in signalling in oligodendrocytes in the early stages of their terminal differentiation into myelin-forming glia and may also function in stabilizing the mature sheath. This chain is Tetraspanin-2 (Tspan2), found in Rattus norvegicus (Rat).